A 365-amino-acid polypeptide reads, in one-letter code: Histidinol-phosphate aminotransferase (365 aa).

A disordered region spans residues 1-22 (MSRPVPNPGILDIAPYTPGKSP). Position 221 is an N6-(pyridoxal phosphate)lysine (lysine 221).

This sequence belongs to the class-II pyridoxal-phosphate-dependent aminotransferase family. Histidinol-phosphate aminotransferase subfamily. In terms of assembly, homodimer. Pyridoxal 5'-phosphate serves as cofactor.

It catalyses the reaction L-histidinol phosphate + 2-oxoglutarate = 3-(imidazol-4-yl)-2-oxopropyl phosphate + L-glutamate. It participates in amino-acid biosynthesis; L-histidine biosynthesis; L-histidine from 5-phospho-alpha-D-ribose 1-diphosphate: step 7/9. This is Histidinol-phosphate aminotransferase from Rhodopseudomonas palustris (strain BisA53).